The following is a 135-amino-acid chain: ATP synthase epsilon chain (135 aa).

It belongs to the ATPase epsilon chain family. F-type ATPases have 2 components, CF(1) - the catalytic core - and CF(0) - the membrane proton channel. CF(1) has five subunits: alpha(3), beta(3), gamma(1), delta(1), epsilon(1). CF(0) has three main subunits: a, b and c.

It is found in the cell inner membrane. Produces ATP from ADP in the presence of a proton gradient across the membrane. The protein is ATP synthase epsilon chain of Rhizobium etli (strain CIAT 652).